Consider the following 296-residue polypeptide: Ribosome biogenesis GTPase A (296 aa).

The region spanning 14-178 (RRQVTEKLKL…LLDTPGILWP (165 aa)) is the CP-type G domain. GTP-binding positions include 58–61 (NKAD), 130–135 (NVGKST), and G174.

The protein belongs to the TRAFAC class YlqF/YawG GTPase family. MTG1 subfamily. In terms of assembly, interacts with ctc. Interacts with the immature 50S ribosome subunit. 2 molecules of rbgA bind to one 50S subunit.

The protein resides in the cytoplasm. In terms of biological role, essential protein that is required for a late step of 50S ribosomal subunit assembly. Has GTPase activity that is stimulated by interaction with the immature 50S ribosome subunit. Binds to the 23S rRNA. Required for the association of ribosomal proteins rplP and rpmA with the large subunit. The sequence is that of Ribosome biogenesis GTPase A from Bacillus cereus (strain ATCC 14579 / DSM 31 / CCUG 7414 / JCM 2152 / NBRC 15305 / NCIMB 9373 / NCTC 2599 / NRRL B-3711).